Here is a 234-residue protein sequence, read N- to C-terminus: bZIP transcription factor 1 (234 aa).

The interval 67 to 134 (RAQSDGSNAL…DKQRNAQQQL (68 aa)) is disordered. A compositionally biased stretch (polar residues) spans 70 to 86 (SDGSNALLSSIGPSGTT). Residues 88-128 (RPRDEMDCFTDTHKHKRGDGNKSRRREQCRANQARYRDKQR) show a composition bias toward basic and acidic residues. A bZIP domain is found at 106 to 169 (DGNKSRRREQ…RTNQSPWNTV (64 aa)). The basic motif stretch occupies residues 109–128 (KSRRREQCRANQARYRDKQR). Residues 134–155 (LERSVEQLQSELSTLKHRNLDL) are leucine-zipper.

Belongs to the bZIP family. As to quaternary structure, interacts with PKZ1.

Its subcellular location is the nucleus. In terms of biological role, required for normal zoospore movement, formation of appressoria by germinated zoospore cysts and plant infection. The protein is bZIP transcription factor 1 of Phytophthora infestans (Potato late blight agent).